We begin with the raw amino-acid sequence, 220 residues long: Putative O-methyltransferase Mjls_4009 (220 aa).

Residues Val47, Glu69, 71–72, Ser77, Asp95, and Val96 contribute to the S-adenosyl-L-methionine site; that span reads GT. Asp143 contributes to the substrate binding site. Asp145 provides a ligand contact to S-adenosyl-L-methionine.

The protein belongs to the class I-like SAM-binding methyltransferase superfamily. Cation-dependent O-methyltransferase family.

This is Putative O-methyltransferase Mjls_4009 from Mycobacterium sp. (strain JLS).